A 321-amino-acid polypeptide reads, in one-letter code: Small ribosomal subunit biogenesis GTPase RsgA (321 aa).

The CP-type G domain occupies 89–248 (QSWINRPPVA…VADTPGFNRP (160 aa)). Residues 138–141 (TKRD) and 190–198 (GPSGVGKTS) contribute to the GTP site. Zn(2+) contacts are provided by C273, C278, H280, and C286.

This sequence belongs to the TRAFAC class YlqF/YawG GTPase family. RsgA subfamily. In terms of assembly, monomer. Associates with 30S ribosomal subunit, binds 16S rRNA. The cofactor is Zn(2+).

The protein resides in the cytoplasm. One of several proteins that assist in the late maturation steps of the functional core of the 30S ribosomal subunit. Helps release RbfA from mature subunits. May play a role in the assembly of ribosomal proteins into the subunit. Circularly permuted GTPase that catalyzes slow GTP hydrolysis, GTPase activity is stimulated by the 30S ribosomal subunit. The protein is Small ribosomal subunit biogenesis GTPase RsgA of Prochlorococcus marinus (strain MIT 9313).